Consider the following 352-residue polypeptide: UDP-N-acetylglucosamine--N-acetylmuramyl-(pentapeptide) pyrophosphoryl-undecaprenol N-acetylglucosamine transferase (352 aa).

Residues 11–13 (TGG), Asn120, Arg161, Ser188, and Gln286 each bind UDP-N-acetyl-alpha-D-glucosamine.

Belongs to the glycosyltransferase 28 family. MurG subfamily.

It localises to the cell inner membrane. It carries out the reaction di-trans,octa-cis-undecaprenyl diphospho-N-acetyl-alpha-D-muramoyl-L-alanyl-D-glutamyl-meso-2,6-diaminopimeloyl-D-alanyl-D-alanine + UDP-N-acetyl-alpha-D-glucosamine = di-trans,octa-cis-undecaprenyl diphospho-[N-acetyl-alpha-D-glucosaminyl-(1-&gt;4)]-N-acetyl-alpha-D-muramoyl-L-alanyl-D-glutamyl-meso-2,6-diaminopimeloyl-D-alanyl-D-alanine + UDP + H(+). The protein operates within cell wall biogenesis; peptidoglycan biosynthesis. Functionally, cell wall formation. Catalyzes the transfer of a GlcNAc subunit on undecaprenyl-pyrophosphoryl-MurNAc-pentapeptide (lipid intermediate I) to form undecaprenyl-pyrophosphoryl-MurNAc-(pentapeptide)GlcNAc (lipid intermediate II). The sequence is that of UDP-N-acetylglucosamine--N-acetylmuramyl-(pentapeptide) pyrophosphoryl-undecaprenol N-acetylglucosamine transferase from Prochlorococcus marinus (strain NATL2A).